A 472-amino-acid polypeptide reads, in one-letter code: Trigger factor (472 aa).

Positions 174 to 261 (GDIALVSFKG…LEDLKIKELP (88 aa)) constitute a PPIase FKBP-type domain. Residues 438 to 472 (EKTPEKARDQIKEKSSKKKTTKTNKEKKSSKTPKS) form a disordered region. Positions 439–451 (KTPEKARDQIKEK) are enriched in basic and acidic residues.

Belongs to the FKBP-type PPIase family. Tig subfamily.

The protein resides in the cytoplasm. It catalyses the reaction [protein]-peptidylproline (omega=180) = [protein]-peptidylproline (omega=0). Functionally, involved in protein export. Acts as a chaperone by maintaining the newly synthesized protein in an open conformation. Functions as a peptidyl-prolyl cis-trans isomerase. The protein is Trigger factor of Prochlorococcus marinus (strain NATL2A).